Consider the following 102-residue polypeptide: MNKIRKGDEVIVVTGKDKGKRGVVLAVGAEHVTVEGINLVKKHVKPNPMKGTTGGVEAKTMPLHISNVALVDANGKASRVGIKVEEGKKVRFLKTTGAVLSA.

The protein belongs to the universal ribosomal protein uL24 family. Part of the 50S ribosomal subunit.

Its function is as follows. One of two assembly initiator proteins, it binds directly to the 5'-end of the 23S rRNA, where it nucleates assembly of the 50S subunit. One of the proteins that surrounds the polypeptide exit tunnel on the outside of the subunit. The chain is Large ribosomal subunit protein uL24 from Burkholderia ambifaria (strain ATCC BAA-244 / DSM 16087 / CCUG 44356 / LMG 19182 / AMMD) (Burkholderia cepacia (strain AMMD)).